A 309-amino-acid polypeptide reads, in one-letter code: Oxygen-dependent coproporphyrinogen-III oxidase (309 aa).

Ser94 is a substrate binding site. A divalent metal cation contacts are provided by His98 and His108. His108 serves as the catalytic Proton donor. 110–112 provides a ligand contact to substrate; that stretch reads NVR. Positions 147 and 177 each coordinate a divalent metal cation. The interval 242–277 is important for dimerization; it reads YVEFNLVWDRGTLFGLQTGGRTESILMSLPPLVRWE. 260–262 contacts substrate; the sequence is GGR.

Belongs to the aerobic coproporphyrinogen-III oxidase family. In terms of assembly, homodimer. Requires a divalent metal cation as cofactor.

Its subcellular location is the cytoplasm. It carries out the reaction coproporphyrinogen III + O2 + 2 H(+) = protoporphyrinogen IX + 2 CO2 + 2 H2O. Its pathway is porphyrin-containing compound metabolism; protoporphyrin-IX biosynthesis; protoporphyrinogen-IX from coproporphyrinogen-III (O2 route): step 1/1. Functionally, involved in the heme biosynthesis. Catalyzes the aerobic oxidative decarboxylation of propionate groups of rings A and B of coproporphyrinogen-III to yield the vinyl groups in protoporphyrinogen-IX. The sequence is that of Oxygen-dependent coproporphyrinogen-III oxidase from Yersinia pestis bv. Antiqua (strain Antiqua).